The following is a 299-amino-acid chain: Prohibitin-2 (299 aa).

Ala2 is modified (N-acetylalanine). Residues 19–49 (MGTALKLLLGAGAVAYGVRESVFTVEGGHRA) form a necessary for transcriptional repression region. Position 128 is a phosphotyrosine (Tyr128). An N6-acetyllysine modification is found at Lys147. The interval 150 to 174 (ASQLITQRAQVSLLIRRELTERAKD) is necessary for transcriptional repression. The residue at position 151 (Ser151) is a Phosphoserine. The stretch at 190–238 (SREYTAAVEAKQVAQQEAQRAQFLVEKAKQEQRQKIVQAEGEAEAAKML) forms a coiled coil. 4 positions are modified to N6-acetyllysine: Lys200, Lys236, Lys250, and Lys262.

The protein belongs to the prohibitin family. As to quaternary structure, the mitochondrial prohibitin complex consists of two subunits (PHB1 and PHB2), assembled into a membrane-associated ring-shaped supercomplex of approximately 1 mDa. Interacts with ESR1, HDAC1 and HDAC5. Interacts with ZNF703. Interacts with STOML2. Interacts with ARFGEF3. Interacts with SPHK2. Interacts with COX4I1; the interaction associates PHB2 with COX. Interacts with MAP1LC3B (membrane-bound form LC3-II); the interaction is direct and upon mitochondrial depolarization and proteasome-dependent outer membrane rupture. Interacts with IGFBP6 (via C-terminal domain). Interacts with CLPB. Interacts with CD86 (via cytoplasmic domain); the interactions increases after priming with CD40. Interacts with AFG3L2. Interacts with DNAJC19. Interacts with AKT2; this interaction may be important for myogenic differentiation. Post-translationally, phosphorylated. Tyrosine phosphorylation is indirectly stimulated by IGFBP6. As to expression, widely expressed in different tissues.

It localises to the mitochondrion inner membrane. Its subcellular location is the cytoplasm. The protein localises to the nucleus. It is found in the cell membrane. Its function is as follows. Protein with pleiotropic attributes mediated in a cell-compartment- and tissue-specific manner, which include the plasma membrane-associated cell signaling functions, mitochondrial chaperone, and transcriptional co-regulator of transcription factors and sex steroid hormones in the nucleus. Functionally, in the mitochondria, together with PHB, forms large ring complexes (prohibitin complexes) in the inner mitochondrial membrane (IMM) and functions as a chaperone protein that stabilizes mitochondrial respiratory enzymes and maintains mitochondrial integrity in the IMM, which is required for mitochondrial morphogenesis, neuronal survival, and normal lifespan. The prohibitin complex, with DNAJC19, regulates cardiolipin remodeling and the protein turnover of OMA1 in a cardiolipin-binding manner. Also regulates cytochrome-c oxidase assembly (COX) and mitochondrial respiration. Binding to sphingoid 1-phosphate (SPP) modulates its regulator activity. Has a key role of mitophagy receptor involved in targeting mitochondria for autophagic degradation. Involved in mitochondrial-mediated antiviral innate immunity, activates RIG-I-mediated signal transduction and production of IFNB1 and pro-inflammatory cytokine IL6. In the nucleus, serves as transcriptional co-regulator. Acts as a mediator of transcriptional repression by nuclear hormone receptors via recruitment of histone deacetylases. Functions as an estrogen receptor (ER)-selective coregulator that potentiates the inhibitory activities of antiestrogens and represses the activity of estrogens. Competes with NCOA1 for modulation of ER transcriptional activity. In terms of biological role, in the plasma membrane, is involved in IGFBP6-induced cell migration. Cooperates with CD86 to mediate CD86-signaling in B lymphocytes that regulates the level of IgG1 produced through the activation of distal signaling intermediates. Upon CD40 engagement, required to activate NF-kappa-B signaling pathway via phospholipase C and protein kinase C activation. The protein is Prohibitin-2 of Mus musculus (Mouse).